A 438-amino-acid chain; its full sequence is Glyceraldehyde-3-phosphate dehydrogenase B, chloroplastic (438 aa).

The N-terminal 53 residues, 1-53, are a transit peptide targeting the chloroplast; sequence CLSKKFEVAEFAGLRSSGCVTFSNKESSFFDVVSAQLTPKTTRSTPVKGETVA. NADP(+) is bound by residues 64-65, Asp-88, and Arg-133; that span reads RI. Residues 207–209, Thr-238, Arg-253, 266–267, and Arg-289 each bind D-glyceraldehyde 3-phosphate; these read SCT and TG. Cys-208 acts as the Nucleophile in catalysis. Asn-372 contributes to the NADP(+) binding site.

This sequence belongs to the glyceraldehyde-3-phosphate dehydrogenase family. Tetramer of either four A chains (GAPDH 2) or two A and two B chains (GAPDH 1).

It localises to the plastid. The protein localises to the chloroplast. The catalysed reaction is D-glyceraldehyde 3-phosphate + phosphate + NADP(+) = (2R)-3-phospho-glyceroyl phosphate + NADPH + H(+). It participates in carbohydrate biosynthesis; Calvin cycle. This is Glyceraldehyde-3-phosphate dehydrogenase B, chloroplastic (GAPB) from Nicotiana tabacum (Common tobacco).